Here is a 323-residue protein sequence, read N- to C-terminus: L-lactate dehydrogenase (323 aa).

Positions 11, 32, and 63 each coordinate NAD(+). Q80 and R86 together coordinate substrate. NAD(+)-binding positions include S99, V116 to N118, and S141. N118–D121 lines the substrate pocket. D146–R149 is a substrate binding site. The beta-D-fructose 1,6-bisphosphate site is built by R151 and H166. The Proton acceptor role is filled by H173. Y221 bears the Phosphotyrosine mark. Position 230 (T230) interacts with substrate.

It belongs to the LDH/MDH superfamily. LDH family. As to quaternary structure, homotetramer.

The protein resides in the cytoplasm. The catalysed reaction is (S)-lactate + NAD(+) = pyruvate + NADH + H(+). The protein operates within fermentation; pyruvate fermentation to lactate; (S)-lactate from pyruvate: step 1/1. With respect to regulation, allosterically activated by fructose 1,6-bisphosphate (FBP). Its function is as follows. Catalyzes the conversion of lactate to pyruvate. This Kosmotoga olearia (strain ATCC BAA-1733 / DSM 21960 / TBF 19.5.1) protein is L-lactate dehydrogenase.